The primary structure comprises 31 residues: Cytochrome b6-f complex subunit 6 (31 aa).

The chain crosses the membrane as a helical span at residues 4-24; that stretch reads ITSYFGFLLAVLTITSALFIG.

Belongs to the PetL family. In terms of assembly, the 4 large subunits of the cytochrome b6-f complex are cytochrome b6, subunit IV (17 kDa polypeptide, PetD), cytochrome f and the Rieske protein, while the 4 small subunits are PetG, PetL, PetM and PetN. The complex functions as a dimer.

It localises to the plastid. The protein resides in the chloroplast thylakoid membrane. Component of the cytochrome b6-f complex, which mediates electron transfer between photosystem II (PSII) and photosystem I (PSI), cyclic electron flow around PSI, and state transitions. PetL is important for photoautotrophic growth as well as for electron transfer efficiency and stability of the cytochrome b6-f complex. The protein is Cytochrome b6-f complex subunit 6 of Cucumis sativus (Cucumber).